The chain runs to 298 residues: Putative olfactory receptor 10D4 (298 aa).

Residues 1 to 23 lie on the Extracellular side of the membrane; that stretch reads MRNHTMVTEFILLGIPETEGLET. An N-linked (GlcNAc...) asparagine glycan is attached at asparagine 3. Residues 24-44 form a helical membrane-spanning segment; that stretch reads ALLFLFSSFYLCTLLGNVLIL. At 45–52 the chain is on the cytoplasmic side; sequence TAIISSTR. The chain crosses the membrane as a helical span at residues 53 to 73; sequence LHTPMYFFLGNLSIFDLGFSS. Over 74–97 the chain is Extracellular; the sequence is TTVPKMLFYLSGNSHAISYAGCVS. Residues cysteine 95 and cysteine 187 are joined by a disulfide bond. A helical membrane pass occupies residues 98 to 118; that stretch reads QLFFYHFLGCTECFLYTVMAC. At 119–137 the chain is on the cytoplasmic side; sequence DRFVAICFPLRYTVIMNHR. Residues 138-158 form a helical membrane-spanning segment; that stretch reads VCFMLATGTWMIGCVHAMILT. Residues 159–195 are Extracellular-facing; sequence PLTFQLPYCGPNKVGYYFCDIPAVLPLACKDTSLAQR. A helical membrane pass occupies residues 196 to 215; it reads VGFTNVGLLSLICFFLILVS. The Cytoplasmic portion of the chain corresponds to 216–235; it reads YTCIGISISKIRSAEGRQRA. Residues 236–256 traverse the membrane as a helical segment; it reads FSTCSAHLTAILCAYGPVIVI. Residues 257 to 267 lie on the Extracellular side of the membrane; sequence YLQPNPSALLG. A helical transmembrane segment spans residues 268–288; the sequence is SIIQILNNLVTPMLNPLIYSL. The Cytoplasmic portion of the chain corresponds to 289–298; sequence RNKDVKSDQP.

This sequence belongs to the G-protein coupled receptor 1 family.

The protein localises to the cell membrane. In terms of biological role, odorant receptor. This Homo sapiens (Human) protein is Putative olfactory receptor 10D4 (OR10D4P).